A 107-amino-acid polypeptide reads, in one-letter code: Phosphoribosyl-ATP pyrophosphatase (107 aa).

It belongs to the PRA-PH family.

The protein resides in the cytoplasm. The catalysed reaction is 1-(5-phospho-beta-D-ribosyl)-ATP + H2O = 1-(5-phospho-beta-D-ribosyl)-5'-AMP + diphosphate + H(+). It participates in amino-acid biosynthesis; L-histidine biosynthesis; L-histidine from 5-phospho-alpha-D-ribose 1-diphosphate: step 2/9. In Agrobacterium fabrum (strain C58 / ATCC 33970) (Agrobacterium tumefaciens (strain C58)), this protein is Phosphoribosyl-ATP pyrophosphatase (hisE).